Here is a 356-residue protein sequence, read N- to C-terminus: Heat-inducible transcription repressor HrcA (356 aa).

The protein belongs to the HrcA family.

Functionally, negative regulator of class I heat shock genes (grpE-dnaK-dnaJ and groELS operons). Prevents heat-shock induction of these operons. The protein is Heat-inducible transcription repressor HrcA of Brucella abortus (strain S19).